Here is a 581-residue protein sequence, read N- to C-terminus: Probable peptidoglycan D,D-transpeptidase PenA (581 aa).

A helical membrane pass occupies residues 28 to 48; the sequence is ISFVLMAIAVLFAGLIARGLY. Ser310 functions as the Acyl-ester intermediate in the catalytic mechanism.

It belongs to the transpeptidase family. FtsI subfamily.

The protein resides in the cell inner membrane. It catalyses the reaction Preferential cleavage: (Ac)2-L-Lys-D-Ala-|-D-Ala. Also transpeptidation of peptidyl-alanyl moieties that are N-acyl substituents of D-alanine.. It functions in the pathway cell wall biogenesis; peptidoglycan biosynthesis. In terms of biological role, catalyzes cross-linking of the peptidoglycan cell wall at the division septum. The polypeptide is Probable peptidoglycan D,D-transpeptidase PenA (Neisseria meningitidis serogroup A / serotype 4A (strain DSM 15465 / Z2491)).